Reading from the N-terminus, the 1201-residue chain is Coatomer subunit alpha (1201 aa).

6 WD repeats span residues 9-39, 51-81, 93-123, 135-165, 207-237, and 251-281; these read SKST…QLWD, DHEG…KVWS, GHLD…RIWN, GHNH…RIWD, GHTR…KLWR, and GHTN…RVWD. A disordered region spans residues 842 to 862; that stretch reads AVNTTQEQEEPLGEENFNDED. The segment covering 848–862 has biased composition (acidic residues); that stretch reads EQEEPLGEENFNDED.

In terms of assembly, oligomeric complex that consists of at least the alpha, beta, beta', gamma, delta, epsilon and zeta subunits. Interacts with the ESCRT-0 subunit VPS27. Interacts with KEI1 (via C-terminal region).

It localises to the cytoplasm. The protein localises to the golgi apparatus membrane. Its subcellular location is the cytoplasmic vesicle. The protein resides in the COPI-coated vesicle membrane. Functionally, the coatomer is a cytosolic protein complex that binds to dilysine motifs and reversibly associates with Golgi non-clathrin-coated vesicles, which further mediate biosynthetic protein transport from the ER, via the Golgi up to the trans Golgi network. Coatomer complex is required for budding from Golgi membranes, and is essential for the retrograde Golgi-to-ER transport of dilysine-tagged proteins. This chain is Coatomer subunit alpha (COP1), found in Saccharomyces cerevisiae (strain ATCC 204508 / S288c) (Baker's yeast).